Here is a 908-residue protein sequence, read N- to C-terminus: Alanine--tRNA ligase (908 aa).

The Zn(2+) site is built by His596, His600, Cys698, and His702.

The protein belongs to the class-II aminoacyl-tRNA synthetase family. Zn(2+) is required as a cofactor.

Its subcellular location is the cytoplasm. It carries out the reaction tRNA(Ala) + L-alanine + ATP = L-alanyl-tRNA(Ala) + AMP + diphosphate. Its function is as follows. Catalyzes the attachment of alanine to tRNA(Ala) in a two-step reaction: alanine is first activated by ATP to form Ala-AMP and then transferred to the acceptor end of tRNA(Ala). Also edits incorrectly charged Ser-tRNA(Ala) and Gly-tRNA(Ala) via its editing domain. The protein is Alanine--tRNA ligase of Lysinibacillus sphaericus (strain C3-41).